A 254-amino-acid polypeptide reads, in one-letter code: UPF0246 protein BDI_1226 (254 aa).

It belongs to the UPF0246 family.

The polypeptide is UPF0246 protein BDI_1226 (Parabacteroides distasonis (strain ATCC 8503 / DSM 20701 / CIP 104284 / JCM 5825 / NCTC 11152)).